A 1040-amino-acid chain; its full sequence is MQVLPPGSTGGPSRLFILRPVATTLLMAAILLAGIIGYRFLPVAALPEVDYPTIQVVTLYPGASPDVMTSAVTAPLERQFGQMSGLKQMSSQSSGGASVVTLQFQLTLPLDVAEQEVQAAINADTNLLPSDLPNPPIYSKVNPADPPIMTLAVTSNAMPMTQVEDMVETRVAQKISQVSGVGLVTLAGGQRPAVRVKLNAQAIAALGLTSETVRTAITGANVNSAKGSLDGPERAVTLSANDQMQSADEYRKLIIAYQNGAPVRLGDVATVEQGAENSWLGAWANQAPAIVMNVQRQPGANIIATADSIRQMLPQLTESLPKSVKVTVLSDRTTNIRASVRDTQFELMLAIALVVMIIYLFLRNIPATIIPGVAVPLSLIGTFAVMVFLDFSINNLTLMALTIATGFVVDDAIVVIENISRYIEKGEKPLAAALKGAGEIGFTIISLTFSLIAVLIPLLFMGDIVGRLFREFAVTLAVAILISAVVSLTLTPMMCARMLSQQSLRKQNRFSRACERMFDRVIASYGRGLAKVLNHPWLTLSVAFATLLLSVMLWIVIPKGFFPVQDNGIIQGTLQAPQSSSYASMAQRQRQVAERILQDPAVQSLTTFVGVDGANPTLNSARLQINLKPLDARDDRVQQVISRLQTAVATIPGVALYLQPTQDLTIDTQVSRTQYQFTLQATTLDALSHWVPKLQNALQSLPQLSEVSSDWQDRGLAAWVNVDRDSASRLGISMADVDNALYNAFGQRLISTIYTQANQYRVVLEHNTASTPGLAALETIRLTSRDGGTVPLSAIARIEQRFAPLSINHLDQFPVTTFSFNVPEGYSLGDAVQAILDTEKTLALPADITTQFQGSTLAFQAALGSTVWLIVAAVVAMYIVLGVLYESFIHPITILSTLPTAGVGALLALIIAGSELDIIAIIGIILLIGIVKKNAIMMINFALAAEREQGMSPRDAIFQACLLRFRPILMTTLAALLGALPLMLSTGVGAELRRPLGIAMVGGLLVSQVLTLFTTPVIYLLFDRLSLYVKSRFPRHKEEA.

The next 12 helical transmembrane spans lie at 25–45 (LLMA…PVAA), 347–367 (LMLA…NIPA), 369–389 (IIPG…MVFL), 396–416 (LTLM…IVVI), 440–460 (IGFT…PLLF), 472–492 (FAVT…TLTP), 537–557 (WLTL…WIVI), 863–883 (LGST…VLGV), 888–908 (FIHP…ALLA), 910–930 (IIAG…LIGI), 968–988 (ILMT…STGV), and 998–1018 (IAMV…TPVI).

Belongs to the resistance-nodulation-cell division (RND) (TC 2.A.6) family. MdtB subfamily. Part of a tripartite efflux system composed of MdtA, MdtB and MdtC. MdtB forms a heteromultimer with MdtC.

It is found in the cell inner membrane. This is Multidrug resistance protein MdtB from Salmonella gallinarum (strain 287/91 / NCTC 13346).